Consider the following 209-residue polypeptide: Rac-like GTP-binding protein ARAC9 (209 aa).

25-32 (GDGAVGKT) provides a ligand contact to GTP. The short motif at 47 to 55 (YVPTVFDNF) is the Effector region element. Residues 72–76 (DTAGQ) and 130–133 (TKSD) each bind GTP. Cys-206 carries the post-translational modification Cysteine methyl ester. The S-geranylgeranyl cysteine moiety is linked to residue Cys-206. A propeptide spans 207-209 (HVL) (removed in mature form).

It belongs to the small GTPase superfamily. Rho family. In terms of assembly, interacts with SPK1.

The protein localises to the cytoplasm. Its subcellular location is the membrane. In terms of biological role, inactive GDP-bound Rho GTPases reside in the cytosol, are found in a complex with Rho GDP-dissociation inhibitors (Rho GDIs), and are released from the GDI protein in order to translocate to membranes upon activation. This is Rac-like GTP-binding protein ARAC9 (ARAC9) from Arabidopsis thaliana (Mouse-ear cress).